Consider the following 231-residue polypeptide: MSTEAALLKLQSWFSPSFPVGGYTYSHGLEYGVECGLIHHRESLQTWLEGLLQWGAGHGEGVLFHGAYGAAVRQDWAALHEVTVWAQALRPTAELALESRGQGRAFLVAVQQGWPHPWVQRWGDGLAEHAPYGVVTGLACAAHGVPEAMGLSALLHGMVAGWISAAVRLIPLGQQAGVLVQSALEGEIQTLVRALLSQPASAFQAELGGCAWMAEWCSLKHETQYTRLFRS.

Belongs to the UreF family. UreD, UreF and UreG form a complex that acts as a GTP-hydrolysis-dependent molecular chaperone, activating the urease apoprotein by helping to assemble the nickel containing metallocenter of UreC. The UreE protein probably delivers the nickel.

The protein resides in the cytoplasm. Its function is as follows. Required for maturation of urease via the functional incorporation of the urease nickel metallocenter. The sequence is that of Urease accessory protein UreF from Magnetococcus marinus (strain ATCC BAA-1437 / JCM 17883 / MC-1).